A 438-amino-acid polypeptide reads, in one-letter code: Metacaspase-1B (438 aa).

The segment at 1-125 (MYYHHSHQGW…SQHFGRGAPS (125 aa)) is disordered. The segment covering 29–38 (PYPYSSNAQY) has biased composition (low complexity). Pro residues predominate over residues 39 to 74 (QPPPGPPPTSHYAPPPGPPPSHYYPPPGSYPSPAPS). Active-site residues include His222 and Cys278.

It belongs to the peptidase C14B family.

Involved in cell death (apoptosis). The sequence is that of Metacaspase-1B (casB) from Aspergillus niger (strain ATCC MYA-4892 / CBS 513.88 / FGSC A1513).